Consider the following 341-residue polypeptide: Thymidine kinase (341 aa).

19–26 (GAYGIGKT) lines the ATP pocket. The Proton acceptor role is filled by E48. Residues Y66 and Q90 each coordinate substrate. R183 contributes to the ATP binding site. R189 contacts substrate.

The protein belongs to the herpesviridae thymidine kinase family. As to quaternary structure, homodimer.

The enzyme catalyses thymidine + ATP = dTMP + ADP + H(+). Its function is as follows. Catalyzes the transfer of the gamma-phospho group of ATP to thymidine to generate dTMP in the salvage pathway of pyrimidine synthesis. The dTMP serves as a substrate for DNA polymerase during viral DNA replication. Allows the virus to be reactivated and to grow in non-proliferative cells lacking a high concentration of phosphorylated nucleic acid precursors. This chain is Thymidine kinase, found in Varicella-zoster virus (strain Dumas) (HHV-3).